A 154-amino-acid chain; its full sequence is Glycosylation-dependent cell adhesion molecule 1 (154 aa).

Positions 1-18 (MKFLCILLLASLAATSLA) are cleaved as a signal peptide. O-linked (GalNAc...) threonine; partial glycosylation is present at T34. 5 positions are modified to phosphoserine: S48, S53, S57, S59, and S65. The span at 51–65 (DLSKEPSISREDLIS) shows a compositional bias: basic and acidic residues. Residues 51-115 (DLSKEPSISR…EHAPSDASTT (65 aa)) form a disordered region. N96 is a glycosylation site (N-linked (GlcNAc...) asparagine).

The protein belongs to the PP3/GlyCAM-1 family. In terms of tissue distribution, highly and specifically expressed in the lactating mammary gland.

It is found in the membrane. This is Glycosylation-dependent cell adhesion molecule 1 (GLYCAM1) from Capra hircus (Goat).